The following is a 147-amino-acid chain: Hemoglobin subunit beta-2 (147 aa).

Val2 bears the N-acetylvaline mark. A Globin domain is found at 3–147 (HLTDAEKSAV…VATALAHKYH (145 aa)). Lys18 carries the post-translational modification N6-succinyllysine. Tyr42 is subject to Phosphotyrosine. Ser45, Ser51, and Ser53 each carry phosphoserine. Position 60 is an N6-succinyllysine (Lys60). Residues His64 and His93 each coordinate heme b. Residue Arg105 is modified to Asymmetric dimethylarginine. The residue at position 124 (Thr124) is a Phosphothreonine.

This sequence belongs to the globin family. As to quaternary structure, heterotetramer of two alpha chains and two beta chains. Red blood cells.

Its function is as follows. Involved in oxygen transport from the lung to the various peripheral tissues. This Mus musculus (Mouse) protein is Hemoglobin subunit beta-2 (Hbb-b2).